A 152-amino-acid chain; its full sequence is Acidic phospholipase A2 homolog taipoxin gamma chain (152 aa).

Positions 1–19 (MHPAHLLVLLAVCVSLLGS) are cleaved as a signal peptide. 8 disulfide bridges follow: Cys-38-Cys-104, Cys-42-Cys-46, Cys-54-Cys-151, Cys-56-Cys-72, Cys-71-Cys-132, Cys-78-Cys-125, Cys-88-Cys-118, and Cys-111-Cys-123. A glycan (N-linked (GlcNAc...) asparagine) is linked at Asn-97.

The protein belongs to the phospholipase A2 family. Group I subfamily. D49 sub-subfamily. Heterotrimer of alpha, beta, and gamma chains; non-covalently linked. In terms of processing, contains 0.9% fucose, 2.2% mannose, 4.2% N-acetyl-D-glucosamine, 3.5% galactose, and 3.8% N-acetyl-neuraminic acid (sialic acid). As to expression, expressed by the venom gland.

Its subcellular location is the secreted. Functionally, heterotrimer: Snake venom phospholipase A2 (PLA2) heterotrimer that acts as a potent presynaptic neurotoxin by blocking synaptic transmission and synaptic vesicle recycling. May act by binding in a calcium-dependent fashion to neurotonal pentraxin-1 (NPTX1) and neurotonal pentraxin-2 (NPTX2), but not to neuronal pentraxin receptor (NPTXR). Also binds to taipoxin-associated calcium binding protein 49 (RCN2), a protein localized in the lumen of endoplasmic reticulum. Its function is as follows. Monomer (gamma chain): Snake venom phospholipase A2 homolog that is neither toxic nor enzymatically active. Does not bind calcium. In Oxyuranus scutellatus scutellatus (Australian taipan), this protein is Acidic phospholipase A2 homolog taipoxin gamma chain.